Here is a 359-residue protein sequence, read N- to C-terminus: Chorismate synthase (359 aa).

Arginine 47 contributes to the NADP(+) binding site. FMN contacts are provided by residues 123–125 (RSS), glycine 283, 298–302 (KPTSS), and arginine 326.

This sequence belongs to the chorismate synthase family. As to quaternary structure, homotetramer. It depends on FMNH2 as a cofactor.

The catalysed reaction is 5-O-(1-carboxyvinyl)-3-phosphoshikimate = chorismate + phosphate. Its pathway is metabolic intermediate biosynthesis; chorismate biosynthesis; chorismate from D-erythrose 4-phosphate and phosphoenolpyruvate: step 7/7. In terms of biological role, catalyzes the anti-1,4-elimination of the C-3 phosphate and the C-6 proR hydrogen from 5-enolpyruvylshikimate-3-phosphate (EPSP) to yield chorismate, which is the branch point compound that serves as the starting substrate for the three terminal pathways of aromatic amino acid biosynthesis. This reaction introduces a second double bond into the aromatic ring system. The protein is Chorismate synthase of Chlamydia caviae (strain ATCC VR-813 / DSM 19441 / 03DC25 / GPIC) (Chlamydophila caviae).